The primary structure comprises 126 residues: Large ribosomal subunit protein uL22 (126 aa).

This sequence belongs to the universal ribosomal protein uL22 family. In terms of assembly, part of the 50S ribosomal subunit.

Its function is as follows. This protein binds specifically to 23S rRNA; its binding is stimulated by other ribosomal proteins, e.g. L4, L17, and L20. It is important during the early stages of 50S assembly. It makes multiple contacts with different domains of the 23S rRNA in the assembled 50S subunit and ribosome. The globular domain of the protein is located near the polypeptide exit tunnel on the outside of the subunit, while an extended beta-hairpin is found that lines the wall of the exit tunnel in the center of the 70S ribosome. This Zymomonas mobilis subsp. mobilis (strain ATCC 31821 / ZM4 / CP4) protein is Large ribosomal subunit protein uL22.